The primary structure comprises 180 residues: Probable chorismate pyruvate-lyase (180 aa).

Arg82, Leu120, and Glu165 together coordinate substrate.

Belongs to the UbiC family.

Its subcellular location is the cytoplasm. The catalysed reaction is chorismate = 4-hydroxybenzoate + pyruvate. It participates in cofactor biosynthesis; ubiquinone biosynthesis. In terms of biological role, removes the pyruvyl group from chorismate, with concomitant aromatization of the ring, to provide 4-hydroxybenzoate (4HB) for the ubiquinone pathway. The chain is Probable chorismate pyruvate-lyase from Aliivibrio fischeri (strain ATCC 700601 / ES114) (Vibrio fischeri).